The sequence spans 132 residues: Small ribosomal subunit protein uS8c (132 aa).

It belongs to the universal ribosomal protein uS8 family. In terms of assembly, part of the 30S ribosomal subunit.

Its subcellular location is the plastid. It is found in the chloroplast. One of the primary rRNA binding proteins, it binds directly to 16S rRNA central domain where it helps coordinate assembly of the platform of the 30S subunit. In Guillardia theta (Cryptophyte), this protein is Small ribosomal subunit protein uS8c (rps8).